The primary structure comprises 46 residues: Large ribosomal subunit protein bL36A (46 aa).

This sequence belongs to the bacterial ribosomal protein bL36 family.

The polypeptide is Large ribosomal subunit protein bL36A (Sodalis glossinidius (strain morsitans)).